A 724-amino-acid polypeptide reads, in one-letter code: uncharacterized protein (724 aa).

Disordered stretches follow at residues 97-131 (RKSFTTPKGVSSEARRSFTRSASYSESNNSFYPSP), 187-252 (ETKI…FETE), 309-434 (FETE…TSKL), and 454-473 (RGVEGKTKKASKGQNSVAEK). Residues 115–128 (TRSASYSESNNSFY) are compositionally biased toward polar residues. Positions 187–217 (ETKIGIEEENEESEILAEEKEEEDNDFSVLE) form a coiled coil. Over residues 193–212 (EEENEESEILAEEKEEEDND) the composition is skewed to acidic residues. Composition is skewed to basic and acidic residues over residues 223–252 (QEIKTEHHRESSGTEHETEAKDHSEGFETE) and 309–322 (FETEHENETEDHSE). Low complexity-rich tracts occupy residues 323 to 333 (TTTSETDSTES) and 347 to 366 (SPQTPSPTVSTFNTKSSLRS). Over residues 367–388 (QPPPPPPSPEHKAPAPPPPPPM) the composition is skewed to pro residues. Polar residues predominate over residues 400 to 410 (FSKTHSTNGDN). Coiled coils occupy residues 495–522 (SYFQQIEEDVQKYAKSIEELKSSIHSFQ) and 649–678 (MELALKERREANEEAKNGEESKMKEERAKR).

This is an uncharacterized protein from Arabidopsis thaliana (Mouse-ear cress).